We begin with the raw amino-acid sequence, 650 residues long: MICOS complex subunit MIC60, mitochondrial (650 aa).

Residues 1 to 34 (MLRKSVLELSSRLSIKRFPRNLGAQRFHLSSSRN) constitute a mitochondrion transit peptide. Residues 26 to 74 (RFHLSSSRNASTSGKNGLPGAKPVGKPDASKVDPPKVTPPPPTKGNSSK) form a disordered region. The segment covering 28-40 (HLSSSRNASTSGK) has biased composition (polar residues). Residues 35–74 (ASTSGKNGLPGAKPVGKPDASKVDPPKVTPPPPTKGNSSK) lie on the Mitochondrial matrix side of the membrane. The helical transmembrane segment at 75–95 (VVIGGVAIAGAFLVAYQTGYL) threads the bilayer. Residues 96 to 549 (DQYLGKEQQK…FDTLKGTLRH (454 aa)) are Mitochondrial intermembrane-facing. 3 disordered regions span residues 121–168 (EAHH…ESDL), 239–267 (QSSS…EDGI), and 284–304 (EGSD…TKET). Residues 284–299 (EGSDTESTGSSSIGEQ) are compositionally biased toward low complexity. 2 coiled-coil regions span residues 345 to 369 (AQVF…LRAR) and 396 to 430 (KAIQ…LAKA). Residues 550-570 (FSLIPPGGGGILAHSLAHVAS) traverse the membrane as a helical segment. Residues 571-650 (SLKFKEVDQA…QSYATCVSLT (80 aa)) are Mitochondrial matrix-facing.

This sequence belongs to the MICOS complex subunit Mic60 family. Component of the mitochondrial contact site and cristae organizing system (MICOS) complex. The MICOS complex associates with mitochondrial outer membrane proteins. Present in a large lipid-enriched complex called mitochondrial transmembrane lipoprotein (MTL) complex made of proteins located in the two mitochondrial membranes, including the TOM complex and the core components of the MICOS complex and containing at least digalactosyldiacylglycerol (DGDG). Binds to TOM40-1. Component of a mitochondrial large protein complex that contains, at least, MIC60, DGS1, TOM40, TOM20 proteins, and petC/RISP.

It localises to the mitochondrion inner membrane. Functionally, component of the MICOS complex, a large protein complex of the mitochondrial inner membrane that plays crucial roles in the maintenance of crista junctions, inner membrane architecture, and formation of contact sites to the outer membrane. Plays a role in keeping cristae membranes connected to the inner boundary membrane. Also promotes protein import via the mitochondrial intermembrane space assembly (MIA) pathway. Involved in the maintenance of mitochondria morphology. Binds to glycerolipids such as cardiolipin (CL). Contributes to the export of phosphatidylethanolamine (PE) from mitochondria and to the import of galactoglycerolipids from plastids during phosphate (Pi) starvation. Promotes lipid desorption from membranes, likely as an initial step for lipid transfer, and regulates probably the tethering between the inner and outer membranes of mitochondria by binding to TOM40 proteins. The sequence is that of MICOS complex subunit MIC60, mitochondrial from Arabidopsis thaliana (Mouse-ear cress).